The following is a 470-amino-acid chain: Putative multidrug resistance protein MdtD (470 aa).

At 1–11 (MTELPDNTRWQ) the chain is on the periplasmic side. A helical transmembrane segment spans residues 12–32 (LWIVAFGFFMQSLDTTIVNTA). At 33–48 (LPSMAKSLGESPLHMH) the chain is on the cytoplasmic side. The helical transmembrane segment at 49-69 (MVVVSYVLTVAVMLPASGWLA) threads the bilayer. Residues 70-76 (DKIGVRN) lie on the Periplasmic side of the membrane. A helical membrane pass occupies residues 77–97 (IFFAAIVLFTLGSLFCALSGT). Residues 98–101 (LNQL) are Cytoplasmic-facing. Residues 102–124 (VLARVLQGVGGAMMVPVGRLTVM) form a helical membrane-spanning segment. Residues 125–137 (KIVPRTQYMAAMT) lie on the Periplasmic side of the membrane. The helical transmembrane segment at 138–158 (FVTLPGQIGPLLGPALGGVLV) threads the bilayer. Over 159–164 (EYASWH) the chain is Cytoplasmic. The chain crosses the membrane as a helical span at residues 165–185 (WIFLINIPVGIVGAMATFMLM). The Periplasmic segment spans residues 186 to 196 (PNYTIETRRFD). A helical transmembrane segment spans residues 197–217 (LPGFLLLAIGMAVLTLALDGS). Residues 218-224 (KSMGISP) lie on the Cytoplasmic side of the membrane. A helical membrane pass occupies residues 225-245 (WTLAGLAAGGAAAILLYLFHA). At 246 to 262 (KKNSGALFSLRLFRTPT) the chain is on the periplasmic side. A helical membrane pass occupies residues 263-283 (FSLGLLGSFAGRIGSGMLPFM). The Cytoplasmic segment spans residues 284 to 285 (TP). The helical transmembrane segment at 286–306 (VFLQIGLGFSPFHAGLMMIPM) threads the bilayer. At 307–341 (VLGSMGMKRIVVQIVNRFGYRRVLVATTLGLALVS) the chain is on the periplasmic side. Residues 342–362 (LLFMSVALLGWYYLLPLVLLL) traverse the membrane as a helical segment. Topologically, residues 363-395 (QGMVNSARFSSMNTLTLKDLPDTLASSGNSLLS) are cytoplasmic. Residues 396–416 (MIMQLSMSIGVTIAGMLLGMF) traverse the membrane as a helical segment. Over 417–430 (GQQHIGIDSSATHH) the chain is Periplasmic. Residues 431 to 451 (VFMYTWLCMAVIIALPAIIFA) traverse the membrane as a helical segment. At 452–470 (RVPNDTQQNMVISRRKRSL) the chain is on the cytoplasmic side.

This sequence belongs to the major facilitator superfamily. TCR/Tet family.

Its subcellular location is the cell inner membrane. The sequence is that of Putative multidrug resistance protein MdtD from Salmonella dublin (strain CT_02021853).